The sequence spans 271 residues: Bifunctional protein FolD (271 aa).

Residues 154–156 (GRS), Ser181, and Ile222 each bind NADP(+).

Belongs to the tetrahydrofolate dehydrogenase/cyclohydrolase family. Homodimer.

It catalyses the reaction (6R)-5,10-methylene-5,6,7,8-tetrahydrofolate + NADP(+) = (6R)-5,10-methenyltetrahydrofolate + NADPH. The catalysed reaction is (6R)-5,10-methenyltetrahydrofolate + H2O = (6R)-10-formyltetrahydrofolate + H(+). It functions in the pathway one-carbon metabolism; tetrahydrofolate interconversion. Catalyzes the oxidation of 5,10-methylenetetrahydrofolate to 5,10-methenyltetrahydrofolate and then the hydrolysis of 5,10-methenyltetrahydrofolate to 10-formyltetrahydrofolate. The polypeptide is Bifunctional protein FolD (Thermotoga sp. (strain RQ2)).